A 258-amino-acid chain; its full sequence is Ribosomal protein L11 methyltransferase (258 aa).

S-adenosyl-L-methionine-binding residues include T117, G138, D160, and N201.

The protein belongs to the methyltransferase superfamily. PrmA family.

It localises to the cytoplasm. The catalysed reaction is L-lysyl-[protein] + 3 S-adenosyl-L-methionine = N(6),N(6),N(6)-trimethyl-L-lysyl-[protein] + 3 S-adenosyl-L-homocysteine + 3 H(+). Functionally, methylates ribosomal protein L11. The chain is Ribosomal protein L11 methyltransferase from Thermosipho melanesiensis (strain DSM 12029 / CIP 104789 / BI429).